The primary structure comprises 206 residues: Small ribosomal subunit protein uS4 (206 aa).

The 61-residue stretch at 96–156 (CRLDNVVYRM…EKSLNQLRIV (61 aa)) folds into the S4 RNA-binding domain.

Belongs to the universal ribosomal protein uS4 family. In terms of assembly, part of the 30S ribosomal subunit. Contacts protein S5. The interaction surface between S4 and S5 is involved in control of translational fidelity.

Functionally, one of the primary rRNA binding proteins, it binds directly to 16S rRNA where it nucleates assembly of the body of the 30S subunit. In terms of biological role, with S5 and S12 plays an important role in translational accuracy. This chain is Small ribosomal subunit protein uS4, found in Pseudomonas entomophila (strain L48).